The following is a 94-amino-acid chain: uncharacterized protein (94 aa).

This is an uncharacterized protein from Saccharomyces cerevisiae (strain ATCC 204508 / S288c) (Baker's yeast).